The following is a 354-amino-acid chain: Histidinol-phosphate aminotransferase (354 aa).

At Lys-222 the chain carries N6-(pyridoxal phosphate)lysine.

Belongs to the class-II pyridoxal-phosphate-dependent aminotransferase family. Histidinol-phosphate aminotransferase subfamily. Homodimer. Pyridoxal 5'-phosphate is required as a cofactor.

The enzyme catalyses L-histidinol phosphate + 2-oxoglutarate = 3-(imidazol-4-yl)-2-oxopropyl phosphate + L-glutamate. It functions in the pathway amino-acid biosynthesis; L-histidine biosynthesis; L-histidine from 5-phospho-alpha-D-ribose 1-diphosphate: step 7/9. In Staphylococcus carnosus (strain TM300), this protein is Histidinol-phosphate aminotransferase.